Here is a 175-residue protein sequence, read N- to C-terminus: Adenine phosphoribosyltransferase (175 aa).

It belongs to the purine/pyrimidine phosphoribosyltransferase family. As to quaternary structure, homodimer.

The protein localises to the cytoplasm. It catalyses the reaction AMP + diphosphate = 5-phospho-alpha-D-ribose 1-diphosphate + adenine. It participates in purine metabolism; AMP biosynthesis via salvage pathway; AMP from adenine: step 1/1. Its function is as follows. Catalyzes a salvage reaction resulting in the formation of AMP, that is energically less costly than de novo synthesis. In Francisella tularensis subsp. tularensis (strain FSC 198), this protein is Adenine phosphoribosyltransferase.